The primary structure comprises 487 residues: MSAEQPAETASAGNPLADRITTADGSKPEGTTETTDNEQADGAAAQLGGSELNEPDYTVEVKLSDLQADPNNPLYSVKSFEDLGLDPRILQGLSAMNFRKPSKIQERALPLLLNNPPKNLVGQSQSGTGKTAAFVLNALSRLDLSTEQAQKTPQALILAPTRELARQIVGVIQCMGQFLDGLNVSTAVPADTNSRHSKIESSVVVGTPGTVMDMIRKRVMVANKLKVLVLDEADNMLDQQGLGDQCIRVKALLPKDIQVVLFSATFPTHVHQYASKFAPQANELTLQHEELTVEGIKQLYLDCSDEEDKYKTLVQLYGLLTVASSIIFVKTRASAAEIEKRMVAEGHTVASLTGGIEGSQRDAVIDQFRAGQAKVLITTNVLARGIDVSTVSMVINYDIPELHQPGAPERQADFQTYLHRIGRTGRFGRVGVSISFVSNREEWNMLNQIQQYFNCTIQRVDTKDWDEVEDIIKKTIKNTRAQAQFGR.

The disordered stretch occupies residues 1 to 53 (MSAEQPAETASAGNPLADRITTADGSKPEGTTETTDNEQADGAAAQLGGSELN). The Q motif motif lies at 78–106 (KSFEDLGLDPRILQGLSAMNFRKPSKIQE). The Helicase ATP-binding domain occupies 111–284 (LLLNNPPKNL…SKFAPQANEL (174 aa)). 124–131 (SQSGTGKT) is an ATP binding site. The DEAD box signature appears at 231-234 (DEAD). The Helicase C-terminal domain occupies 295-468 (GIKQLYLDCS…RVDTKDWDEV (174 aa)).

This sequence belongs to the DEAD box helicase family. DDX19/DBP5 subfamily. Associates with the nuclear pore complex.

The protein resides in the cytoplasm. The protein localises to the nucleus. It is found in the nuclear pore complex. It localises to the nucleus membrane. The catalysed reaction is ATP + H2O = ADP + phosphate + H(+). Its function is as follows. ATP-dependent RNA helicase associated with the nuclear pore complex and essential for mRNA export from the nucleus. May participate in a terminal step of mRNA export through the removal of proteins that accompany mRNA through the nucleopore complex. May also be involved in early transcription. The sequence is that of ATP-dependent RNA helicase dbp5 (dbp5) from Aspergillus oryzae (strain ATCC 42149 / RIB 40) (Yellow koji mold).